Here is a 256-residue protein sequence, read N- to C-terminus: Glutamate racemase (256 aa).

Residues 5–6 and 37–38 each bind substrate; these read DS and YG. The active-site Proton donor/acceptor is the Cys69. 70-71 serves as a coordination point for substrate; the sequence is NT. The active-site Proton donor/acceptor is the Cys181. 182 to 183 is a binding site for substrate; it reads TH.

Belongs to the aspartate/glutamate racemases family.

It catalyses the reaction L-glutamate = D-glutamate. It functions in the pathway cell wall biogenesis; peptidoglycan biosynthesis. Functionally, provides the (R)-glutamate required for cell wall biosynthesis. The sequence is that of Glutamate racemase from Buchnera aphidicola subsp. Schizaphis graminum (strain Sg).